The following is a 266-amino-acid chain: MRYLKKLAWFISVIILGIFIIGCDSSSDTGEKAKEDSKEEQIKKSFAKTLDMYPIKNLEDLYDKEGYRDSEFKKGDKGMWMIYTDFAKSNKPGVLDNEGMILNLDRNTRTAKGYYFVDTIYDNHENSYSKNYRVEMKNNKIILLDKVEDQKLKERIENFKFFGQYADFKSLKSYNNGDVSINSNVPSYDAKFKMSNKDENVKQLRSRYNIPTEKAPILKMHIDGDLKGSSVGYKKLEIDFSKEENSELSVVDSLNFQPAKKNKDDE.

The first 22 residues, 1–22 (MRYLKKLAWFISVIILGIFIIG), serve as a signal peptide directing secretion. Cysteine 23 carries N-palmitoyl cysteine lipidation. Cysteine 23 is lipidated: S-diacylglycerol cysteine.

This sequence belongs to the staphylococcal tandem lipoprotein family.

It localises to the cell membrane. This is an uncharacterized protein from Staphylococcus aureus (strain USA300).